The following is a 359-amino-acid chain: Alpha-2-HS-glycoprotein (359 aa).

Residues 1–18 form the signal peptide; that stretch reads MKSFVLLFCLAQLWGCHS. Positions 27-133 constitute a Cystatin fetuin-A-type 1 domain; sequence YKEPACDDPD…QFSVLFTKCD (107 aa). Intrachain disulfides connect C32-C350, C89-C100, C114-C132, C146-C149, C208-C219, and C230-C248. N-linked (GlcNAc...) asparagine glycosylation occurs at N99. Phosphoserine is present on residues S134, S135, and S138. The 113-residue stretch at 144 to 256 folds into the Cystatin fetuin-A-type 2 domain; sequence KLCPDCPLLA…TCTLFQTQPV (113 aa). N156 and N176 each carry an N-linked (GlcNAc...) asparagine glycan. The disordered stretch occupies residues 257 to 285; it reads IPQPQPDGAEAEAPSAVPDAAGPTPSAAG. A glycan (O-linked (GalNAc...) serine) is linked at S271. Residues 276 to 285 show a composition bias toward low complexity; that stretch reads AAGPTPSAAG. A glycan (O-linked (GalNAc...) threonine) is linked at T280. Residues S282 and S296 are each glycosylated (O-linked (GalNAc...) serine). T314 is subject to Phosphothreonine. Phosphoserine is present on residues S316, S320, S323, and S325. T334 carries O-linked (GalNAc...) threonine glycosylation. S341 carries an O-linked (GalNAc...) serine; partial glycan.

The protein belongs to the fetuin family. Post-translationally, phosphorylated by FAM20C in the extracellular medium. As to expression, liver and bone.

The protein resides in the secreted. In terms of biological role, promotes endocytosis, possesses opsonic properties and influences the mineral phase of bone. Suggested to have lymphocyte stimulating properties, lipid binding capability and to bind thyroid hormone. The chain is Alpha-2-HS-glycoprotein (AHSG) from Bos taurus (Bovine).